A 311-amino-acid polypeptide reads, in one-letter code: Cell division protein ZipA (311 aa).

The Periplasmic portion of the chain corresponds to 1–6; that stretch reads MENLQL. Residues 7–27 form a helical membrane-spanning segment; that stretch reads VLFVLGAIAIIAVLVHGFWSI. The Cytoplasmic segment spans residues 28 to 311; that stretch reads RKQQPKSLKE…YLQRIRAQLD (284 aa). The disordered stretch occupies residues 46–114; that stretch reads DQASVRDSQG…FALSDEPVQR (69 aa). Basic and acidic residues-rich tracts occupy residues 62–83 and 94–103; these read GEVR…DKPV and RDVEDSRHEQ.

This sequence belongs to the ZipA family. Interacts with FtsZ via their C-terminal domains.

It is found in the cell inner membrane. Functionally, essential cell division protein that stabilizes the FtsZ protofilaments by cross-linking them and that serves as a cytoplasmic membrane anchor for the Z ring. Also required for the recruitment to the septal ring of downstream cell division proteins. The sequence is that of Cell division protein ZipA from Shewanella woodyi (strain ATCC 51908 / MS32).